A 123-amino-acid polypeptide reads, in one-letter code: Holo-[acyl-carrier-protein] synthase (123 aa).

Positions 8 and 50 each coordinate Mg(2+).

Belongs to the P-Pant transferase superfamily. AcpS family. The cofactor is Mg(2+).

Its subcellular location is the cytoplasm. The enzyme catalyses apo-[ACP] + CoA = holo-[ACP] + adenosine 3',5'-bisphosphate + H(+). In terms of biological role, transfers the 4'-phosphopantetheine moiety from coenzyme A to a Ser of acyl-carrier-protein. This Kocuria rhizophila (strain ATCC 9341 / DSM 348 / NBRC 103217 / DC2201) protein is Holo-[acyl-carrier-protein] synthase.